The chain runs to 438 residues: Adenylosuccinate synthetase (438 aa).

GTP-binding positions include 13–19 (GDEGKGK) and 41–43 (GHT). Residue D14 is the Proton acceptor of the active site. Positions 14 and 41 each coordinate Mg(2+). Residues 14-17 (DEGK), 39-42 (NAGH), T130, R144, Q225, T240, and R312 contribute to the IMP site. H42 functions as the Proton donor in the catalytic mechanism. Substrate is bound at residue 308-314 (ATTGRQR). GTP-binding positions include R314, 340 to 342 (KLD), and 422 to 424 (STG).

It belongs to the adenylosuccinate synthetase family. As to quaternary structure, homodimer. It depends on Mg(2+) as a cofactor.

The protein resides in the cytoplasm. The enzyme catalyses IMP + L-aspartate + GTP = N(6)-(1,2-dicarboxyethyl)-AMP + GDP + phosphate + 2 H(+). The protein operates within purine metabolism; AMP biosynthesis via de novo pathway; AMP from IMP: step 1/2. In terms of biological role, plays an important role in the de novo pathway of purine nucleotide biosynthesis. Catalyzes the first committed step in the biosynthesis of AMP from IMP. In Ruthia magnifica subsp. Calyptogena magnifica, this protein is Adenylosuccinate synthetase.